A 194-amino-acid chain; its full sequence is Imidazoleglycerol-phosphate dehydratase (194 aa).

It belongs to the imidazoleglycerol-phosphate dehydratase family.

It is found in the cytoplasm. It carries out the reaction D-erythro-1-(imidazol-4-yl)glycerol 3-phosphate = 3-(imidazol-4-yl)-2-oxopropyl phosphate + H2O. It participates in amino-acid biosynthesis; L-histidine biosynthesis; L-histidine from 5-phospho-alpha-D-ribose 1-diphosphate: step 6/9. The chain is Imidazoleglycerol-phosphate dehydratase from Bacillus anthracis (strain A0248).